The following is a 301-amino-acid chain: Acetyl-coenzyme A carboxylase carboxyl transferase subunit beta (301 aa).

Residues 25–294 (LWIKDPSTGE…NSDAPAPQKP (270 aa)) form the CoA carboxyltransferase N-terminal domain.

Belongs to the AccD/PCCB family. In terms of assembly, acetyl-CoA carboxylase is a heterohexamer composed of biotin carboxyl carrier protein (AccB), biotin carboxylase (AccC) and two subunits each of ACCase subunit alpha (AccA) and ACCase subunit beta (AccD).

It localises to the cytoplasm. The enzyme catalyses N(6)-carboxybiotinyl-L-lysyl-[protein] + acetyl-CoA = N(6)-biotinyl-L-lysyl-[protein] + malonyl-CoA. It participates in lipid metabolism; malonyl-CoA biosynthesis; malonyl-CoA from acetyl-CoA: step 1/1. Functionally, component of the acetyl coenzyme A carboxylase (ACC) complex. Biotin carboxylase (BC) catalyzes the carboxylation of biotin on its carrier protein (BCCP) and then the CO(2) group is transferred by the transcarboxylase to acetyl-CoA to form malonyl-CoA. This is Acetyl-coenzyme A carboxylase carboxyl transferase subunit beta from Brucella abortus (strain 2308).